The chain runs to 997 residues: FHIP family protein CPIJ015043 (997 aa).

2 disordered regions span residues 558–579 and 759–922; these read DHRSSQCQSPAQQHLHQQQQLQ and NVVL…GGAA. Positions 569-579 are enriched in low complexity; it reads QQHLHQQQQLQ. Residues 763–780 are compositionally biased toward gly residues; that stretch reads GGSGPGGPRLSNGGGGTG. 2 stretches are compositionally biased toward low complexity: residues 781 to 792 and 830 to 889; these read SSITSSLSQTTP and GSNS…MVGS. Residues 911 to 922 show a composition bias toward gly residues; that stretch reads IGSGTVGGGGAA.

The protein belongs to the FHIP family.

The sequence is that of FHIP family protein CPIJ015043 from Culex quinquefasciatus (Southern house mosquito).